A 434-amino-acid chain; its full sequence is Serine--tRNA ligase (434 aa).

Residue 237 to 239 participates in L-serine binding; the sequence is TAE. Residue 268-270 coordinates ATP; the sequence is RAE. L-serine is bound at residue Glu-291. 358–361 provides a ligand contact to ATP; the sequence is EISS. Ser-393 contributes to the L-serine binding site.

The protein belongs to the class-II aminoacyl-tRNA synthetase family. Type-1 seryl-tRNA synthetase subfamily. As to quaternary structure, homodimer. The tRNA molecule binds across the dimer.

The protein resides in the cytoplasm. It catalyses the reaction tRNA(Ser) + L-serine + ATP = L-seryl-tRNA(Ser) + AMP + diphosphate + H(+). The enzyme catalyses tRNA(Sec) + L-serine + ATP = L-seryl-tRNA(Sec) + AMP + diphosphate + H(+). It participates in aminoacyl-tRNA biosynthesis; selenocysteinyl-tRNA(Sec) biosynthesis; L-seryl-tRNA(Sec) from L-serine and tRNA(Sec): step 1/1. In terms of biological role, catalyzes the attachment of serine to tRNA(Ser). Is also able to aminoacylate tRNA(Sec) with serine, to form the misacylated tRNA L-seryl-tRNA(Sec), which will be further converted into selenocysteinyl-tRNA(Sec). In Rhodopseudomonas palustris (strain BisB5), this protein is Serine--tRNA ligase.